Consider the following 235-residue polypeptide: Sugar fermentation stimulation protein homolog (235 aa).

It belongs to the SfsA family.

The polypeptide is Sugar fermentation stimulation protein homolog (Roseobacter denitrificans (strain ATCC 33942 / OCh 114) (Erythrobacter sp. (strain OCh 114))).